Consider the following 503-residue polypeptide: MVLEMLNPIHYNITSIVPEAMPAATMPVLLLTGLFLLVWNYEGTSSIPGPGYCMGIGPLISHGRFLWMGIGSACNYYNRVYGEFMRVWISGEETLIISKSSSMFHIMKHNHYSSRFGSKLGLQCIGMHEKGIIFNNNPELWKTTRPFFMKALSGPGLVRMVTVCAESLKTHLDRLEEVTNESGYVDVLTLLRRVMLDTSNTLFLRIPLDESAIVVKIQGYFDAWQALLIKPDIFFKISWLYKKYEKSVKDLKDAIEVLIAEKRRRISTEEKLEECMDFATELILAEKRGDLTRENVNQCILEMLIAAPDTMSVSLFFMLFLIAKHPNVEEAIIKEIQTVIGERDIKIDDIQKLKVMENFIYESMRYQPVVDLVMRKALEDDVIDGYPVKKGTNIILNIGRMHRLEFFPKPNEFTLENFAKNVPYRYFQPFGFGPRGCAGKYIAMVMMKAILVTLLRRFHVKTLQGQCVESIQKIHDLSLHPDETKNMLEMIFTPRNSDRCLEH.

Transmembrane regions (helical) follow at residues 19–39 (EAMP…LLVW) and 303–323 (MLIA…FLIA). Residues D309 and M374 each contribute to the substrate site. Heme is bound at residue C437.

The protein belongs to the cytochrome P450 family. Requires heme as cofactor. Post-translationally, phosphorylated in vitro by PKA and PKG/PRKG1. These phosphorylations inhibit the catalytic activity as measured by estrone synthesis from androstenedione (36% decrease for PKA and 30% for PKG/PRKG1). Widely expressed, including in adult and fetal brain, placenta, skin fibroblasts, adipose tissue and gonads.

Its subcellular location is the endoplasmic reticulum membrane. The protein resides in the microsome membrane. It carries out the reaction testosterone + 3 reduced [NADPH--hemoprotein reductase] + 3 O2 = 17beta-estradiol + formate + 3 oxidized [NADPH--hemoprotein reductase] + 4 H2O + 4 H(+). The enzyme catalyses androst-4-ene-3,17-dione + 3 reduced [NADPH--hemoprotein reductase] + 3 O2 = estrone + formate + 3 oxidized [NADPH--hemoprotein reductase] + 4 H2O + 4 H(+). It catalyses the reaction androst-4-ene-3,17-dione + reduced [NADPH--hemoprotein reductase] + O2 = 19-hydroxyandrost-4-ene-3,17-dione + oxidized [NADPH--hemoprotein reductase] + H2O + H(+). The catalysed reaction is 19-hydroxyandrost-4-ene-3,17-dione + reduced [NADPH--hemoprotein reductase] + O2 = 19-oxo-androst-4-ene-3,17-dione + oxidized [NADPH--hemoprotein reductase] + 2 H2O + H(+). It carries out the reaction 19-oxo-androst-4-ene-3,17-dione + reduced [NADPH--hemoprotein reductase] + O2 = estrone + formate + oxidized [NADPH--hemoprotein reductase] + H2O + 2 H(+). The enzyme catalyses estrone + reduced [NADPH--hemoprotein reductase] + O2 = 2-hydroxyestrone + oxidized [NADPH--hemoprotein reductase] + H2O + H(+). It catalyses the reaction 17beta-hydroxy-5alpha-androstan-3-one + reduced [NADPH--hemoprotein reductase] + O2 = 17beta,19-dihydroxy-3-oxo-5alpha-androstanone + oxidized [NADPH--hemoprotein reductase] + H2O + H(+). The catalysed reaction is 17beta,19-dihydroxy-3-oxo-5alpha-androstanone + reduced [NADPH--hemoprotein reductase] + O2 = 17beta-hydroxy-3,19-dioxo-5alpha-androstanone + oxidized [NADPH--hemoprotein reductase] + 2 H2O + H(+). It carries out the reaction 17beta-hydroxy-3,19-dioxo-5alpha-androstanone + reduced [NADPH--hemoprotein reductase] + O2 = 17beta-hydroxy-3-oxo-19-nor-5alpha-androst-1-ene + formate + oxidized [NADPH--hemoprotein reductase] + H2O + 2 H(+). The protein operates within steroid hormone biosynthesis. A cytochrome P450 monooxygenase that catalyzes the conversion of C19 androgens, androst-4-ene-3,17-dione (androstenedione) and testosterone to the C18 estrogens, estrone and estradiol, respectively. Catalyzes three successive oxidations of C19 androgens: two conventional oxidations at C19 yielding 19-hydroxy and 19-oxo/19-aldehyde derivatives, followed by a third oxidative aromatization step that involves C1-beta hydrogen abstraction combined with cleavage of the C10-C19 bond to yield a phenolic A ring and formic acid. Alternatively, the third oxidative reaction yields a 19-norsteroid and formic acid. Converts dihydrotestosterone to delta1,10-dehydro 19-nordihydrotestosterone and may play a role in homeostasis of this potent androgen. Also displays 2-hydroxylase activity toward estrone. Mechanistically, uses molecular oxygen inserting one oxygen atom into a substrate, and reducing the second into a water molecule, with two electrons provided by NADPH via cytochrome P450 reductase (CPR; NADPH-ferrihemoprotein reductase). In Homo sapiens (Human), this protein is Aromatase.